The primary structure comprises 179 residues: Large ribosomal subunit protein uL5 (179 aa).

It belongs to the universal ribosomal protein uL5 family. Part of the 50S ribosomal subunit; part of the 5S rRNA/L5/L18/L25 subcomplex. Contacts the 5S rRNA and the P site tRNA. Forms a bridge to the 30S subunit in the 70S ribosome.

This is one of the proteins that bind and probably mediate the attachment of the 5S RNA into the large ribosomal subunit, where it forms part of the central protuberance. In the 70S ribosome it contacts protein S13 of the 30S subunit (bridge B1b), connecting the 2 subunits; this bridge is implicated in subunit movement. Contacts the P site tRNA; the 5S rRNA and some of its associated proteins might help stabilize positioning of ribosome-bound tRNAs. The protein is Large ribosomal subunit protein uL5 of Sodalis glossinidius (strain morsitans).